Here is a 200-residue protein sequence, read N- to C-terminus: NADH-quinone oxidoreductase subunit I 1 (200 aa).

4Fe-4S ferredoxin-type domains are found at residues 52–82 and 98–127; these read LNRH…VEGA and RVYQ…MTNE. Cys-62, Cys-65, Cys-68, Cys-72, Cys-107, Cys-110, Cys-113, and Cys-117 together coordinate [4Fe-4S] cluster. The interval 181–200 is disordered; it reads TERQVAVSKGEKPQDEGVEA. A compositionally biased stretch (basic and acidic residues) spans 189–200; the sequence is KGEKPQDEGVEA.

The protein belongs to the complex I 23 kDa subunit family. In terms of assembly, NDH-1 is composed of 14 different subunits. Subunits NuoA, H, J, K, L, M, N constitute the membrane sector of the complex. It depends on [4Fe-4S] cluster as a cofactor.

Its subcellular location is the cell membrane. The catalysed reaction is a quinone + NADH + 5 H(+)(in) = a quinol + NAD(+) + 4 H(+)(out). Its function is as follows. NDH-1 shuttles electrons from NADH, via FMN and iron-sulfur (Fe-S) centers, to quinones in the respiratory chain. The immediate electron acceptor for the enzyme in this species is believed to be ubiquinone. Couples the redox reaction to proton translocation (for every two electrons transferred, four hydrogen ions are translocated across the cytoplasmic membrane), and thus conserves the redox energy in a proton gradient. The sequence is that of NADH-quinone oxidoreductase subunit I 1 from Streptomyces avermitilis (strain ATCC 31267 / DSM 46492 / JCM 5070 / NBRC 14893 / NCIMB 12804 / NRRL 8165 / MA-4680).